Consider the following 334-residue polypeptide: Putative B3 domain-containing protein At3g49610 (334 aa).

Disordered regions lie at residues 69–89 (ERRT…GSEK) and 133–178 (DEFE…KFDP). Polar residues-rich tracts occupy residues 73-84 (LGSSPTKTNTLF) and 141-157 (KSPT…SCLM). Residues 161–173 (KRKRYQSSGKSKK) show a composition bias toward basic residues. A DNA-binding region (TF-B3) is located at residues 229 to 334 (FNKLLRNDFL…GVLCFALEKE (106 aa)).

The protein resides in the nucleus. The sequence is that of Putative B3 domain-containing protein At3g49610 from Arabidopsis thaliana (Mouse-ear cress).